A 376-amino-acid chain; its full sequence is Putative C-mannosyltransferase DPY19L2P2 (376 aa).

Residue Asn32 is glycosylated (N-linked (GlcNAc...) asparagine). Transmembrane regions (helical) follow at residues 52 to 72 (ACFY…LFFI), 107 to 127 (LRES…TLIL), 154 to 174 (AQFI…VGYI), 182 to 202 (IIYM…GNSM), 233 to 253 (LNCW…LKFL), and 299 to 319 (LLIY…CFIF).

This sequence belongs to the dpy-19 family. As to expression, fibroblast, lung, lymphoblast, spleen and testis.

It localises to the membrane. Probable C-mannosyltransferase that mediates C-mannosylation of tryptophan residues on target proteins. The chain is Putative C-mannosyltransferase DPY19L2P2 (DPY19L2P2) from Homo sapiens (Human).